Reading from the N-terminus, the 674-residue chain is DNA ligase (674 aa).

Residues 34–38, 83–84, and Glu117 each bind NAD(+); these read DFEFD and SL. Lys119 functions as the N6-AMP-lysine intermediate in the catalytic mechanism. Residues Arg140, Glu184, Lys297, and Lys321 each coordinate NAD(+). Residues Cys415, Cys418, Cys433, and Cys439 each contribute to the Zn(2+) site. The BRCT domain maps to 598–674; the sequence is LVNTNFEGQS…IDEDEFERML (77 aa).

Belongs to the NAD-dependent DNA ligase family. LigA subfamily. It depends on Mg(2+) as a cofactor. The cofactor is Mn(2+).

The enzyme catalyses NAD(+) + (deoxyribonucleotide)n-3'-hydroxyl + 5'-phospho-(deoxyribonucleotide)m = (deoxyribonucleotide)n+m + AMP + beta-nicotinamide D-nucleotide.. Functionally, DNA ligase that catalyzes the formation of phosphodiester linkages between 5'-phosphoryl and 3'-hydroxyl groups in double-stranded DNA using NAD as a coenzyme and as the energy source for the reaction. It is essential for DNA replication and repair of damaged DNA. This is DNA ligase from Chlorobaculum parvum (strain DSM 263 / NCIMB 8327) (Chlorobium vibrioforme subsp. thiosulfatophilum).